A 122-amino-acid chain; its full sequence is Large ribosomal subunit protein uL14 (122 aa).

This sequence belongs to the universal ribosomal protein uL14 family. Part of the 50S ribosomal subunit. Forms a cluster with proteins L3 and L19. In the 70S ribosome, L14 and L19 interact and together make contacts with the 16S rRNA in bridges B5 and B8.

Binds to 23S rRNA. Forms part of two intersubunit bridges in the 70S ribosome. This chain is Large ribosomal subunit protein uL14, found in Pelodictyon phaeoclathratiforme (strain DSM 5477 / BU-1).